Consider the following 532-residue polypeptide: Glucose-6-phosphate isomerase (532 aa).

Glu322 functions as the Proton donor in the catalytic mechanism. Active-site residues include His351 and Lys457.

Belongs to the GPI family.

It localises to the cytoplasm. It catalyses the reaction alpha-D-glucose 6-phosphate = beta-D-fructose 6-phosphate. The protein operates within carbohydrate biosynthesis; gluconeogenesis. It functions in the pathway carbohydrate degradation; glycolysis; D-glyceraldehyde 3-phosphate and glycerone phosphate from D-glucose: step 2/4. Catalyzes the reversible isomerization of glucose-6-phosphate to fructose-6-phosphate. In Synechococcus sp. (strain JA-2-3B'a(2-13)) (Cyanobacteria bacterium Yellowstone B-Prime), this protein is Glucose-6-phosphate isomerase.